A 207-amino-acid polypeptide reads, in one-letter code: Ribosomal RNA small subunit methyltransferase G (207 aa).

S-adenosyl-L-methionine contacts are provided by residues G74, F79, 124–125 (VE), and R138.

The protein belongs to the methyltransferase superfamily. RNA methyltransferase RsmG family.

The protein resides in the cytoplasm. It carries out the reaction guanosine(527) in 16S rRNA + S-adenosyl-L-methionine = N(7)-methylguanosine(527) in 16S rRNA + S-adenosyl-L-homocysteine. Specifically methylates the N7 position of guanine in position 527 of 16S rRNA. The chain is Ribosomal RNA small subunit methyltransferase G from Hyphomonas neptunium (strain ATCC 15444).